Here is a 93-residue protein sequence, read N- to C-terminus: Large ribosomal subunit protein eL31 (93 aa).

This sequence belongs to the eukaryotic ribosomal protein eL31 family.

The protein is Large ribosomal subunit protein eL31 of Methanosarcina mazei (strain ATCC BAA-159 / DSM 3647 / Goe1 / Go1 / JCM 11833 / OCM 88) (Methanosarcina frisia).